A 341-amino-acid chain; its full sequence is N-acetyl-gamma-glutamyl-phosphate reductase (341 aa).

Residue Cys-147 is part of the active site.

The protein belongs to the NAGSA dehydrogenase family. Type 1 subfamily.

Its subcellular location is the cytoplasm. The catalysed reaction is N-acetyl-L-glutamate 5-semialdehyde + phosphate + NADP(+) = N-acetyl-L-glutamyl 5-phosphate + NADPH + H(+). Its pathway is amino-acid biosynthesis; L-arginine biosynthesis; N(2)-acetyl-L-ornithine from L-glutamate: step 3/4. In terms of biological role, catalyzes the NADPH-dependent reduction of N-acetyl-5-glutamyl phosphate to yield N-acetyl-L-glutamate 5-semialdehyde. This is N-acetyl-gamma-glutamyl-phosphate reductase from Dehalococcoides mccartyi (strain ATCC BAA-2100 / JCM 16839 / KCTC 5957 / BAV1).